The sequence spans 492 residues: Probable malate:quinone oxidoreductase (492 aa).

The protein belongs to the MQO family. It depends on FAD as a cofactor.

It catalyses the reaction (S)-malate + a quinone = a quinol + oxaloacetate. It participates in carbohydrate metabolism; tricarboxylic acid cycle; oxaloacetate from (S)-malate (quinone route): step 1/1. The protein is Probable malate:quinone oxidoreductase of Methylobacillus flagellatus (strain ATCC 51484 / DSM 6875 / VKM B-1610 / KT).